The chain runs to 470 residues: Glutamate--tRNA ligase (470 aa).

Residues 9–19 carry the 'HIGH' region motif; sequence PSPTGFLHVGG. The short motif at 236–240 is the 'KMSKS' region element; it reads RLSKR. Lys239 contacts ATP.

This sequence belongs to the class-I aminoacyl-tRNA synthetase family. Glutamate--tRNA ligase type 1 subfamily. In terms of assembly, monomer.

The protein localises to the cytoplasm. The enzyme catalyses tRNA(Glu) + L-glutamate + ATP = L-glutamyl-tRNA(Glu) + AMP + diphosphate. Functionally, catalyzes the attachment of glutamate to tRNA(Glu) in a two-step reaction: glutamate is first activated by ATP to form Glu-AMP and then transferred to the acceptor end of tRNA(Glu). This chain is Glutamate--tRNA ligase, found in Legionella pneumophila subsp. pneumophila (strain Philadelphia 1 / ATCC 33152 / DSM 7513).